Reading from the N-terminus, the 255-residue chain is MELIPAIDLMNGKCVRLFKGDFNKRKDFTKEPHEQAKYWESEGAKYIHIVDLDAAKTGSPTNDKSIKDIAKTVNIPIQIGGGIRSQERIEQLFSYGIEKVIMGTSAIENKELVKDLSNKFPGRIIVGIDAKDGKVSTRGWLEQSNILATDLVREFSSFKIASFIVTDINTDGTLEGTNEEFIKRILEITDIPVIASGGVGSISDLLSLVKLENSGLFGVIVGKALYENKFKISEAINVLSSERLTDFDLNNNYYA.

The active-site Proton acceptor is Asp8. The Proton donor role is filled by Asp129.

It belongs to the HisA/HisF family.

It is found in the cytoplasm. It carries out the reaction 1-(5-phospho-beta-D-ribosyl)-5-[(5-phospho-beta-D-ribosylamino)methylideneamino]imidazole-4-carboxamide = 5-[(5-phospho-1-deoxy-D-ribulos-1-ylimino)methylamino]-1-(5-phospho-beta-D-ribosyl)imidazole-4-carboxamide. Its pathway is amino-acid biosynthesis; L-histidine biosynthesis; L-histidine from 5-phospho-alpha-D-ribose 1-diphosphate: step 4/9. This is 1-(5-phosphoribosyl)-5-[(5-phosphoribosylamino)methylideneamino] imidazole-4-carboxamide isomerase from Prochlorococcus marinus (strain MIT 9312).